Here is a 66-residue protein sequence, read N- to C-terminus: Toxin Aah6 (66 aa).

The LCN-type CS-alpha/beta domain maps to 2 to 65 (RDGYVVKNGT…LYGDDGTYCS (64 aa)). N-linked (GlcNAc...) asparagine glycosylation is present at Asn9. 4 cysteine pairs are disulfide-bonded: Cys13–Cys64, Cys17–Cys40, Cys26–Cys45, and Cys30–Cys47.

This sequence belongs to the long (4 C-C) scorpion toxin superfamily. Sodium channel inhibitor family. Beta subfamily. In terms of processing, N-glycans are core-fucosylated, heterogeneous and short which could be the result of extensive trimming. Expressed by the venom gland.

The protein resides in the secreted. Beta toxins bind voltage-independently at site-4 of sodium channels and shift the voltage of activation toward more negative potentials thereby affecting sodium channel activation and promoting spontaneous and repetitive firing. This toxin is active only on insects. This toxin has very low anti-insect activity. In Androctonus australis (Sahara scorpion), this protein is Toxin Aah6.